We begin with the raw amino-acid sequence, 123 residues long: Small ribosomal subunit protein uS13c (123 aa).

The interval 89–123 (RGKRHRNNLPVRGQRTRTNARSRRGSKKTVTGKKK) is disordered. Positions 102-123 (QRTRTNARSRRGSKKTVTGKKK) are enriched in basic residues.

It belongs to the universal ribosomal protein uS13 family. As to quaternary structure, part of the 30S ribosomal subunit.

Its subcellular location is the plastid. The protein resides in the chloroplast. Its function is as follows. Located at the top of the head of the 30S subunit, it contacts several helices of the 16S rRNA. The protein is Small ribosomal subunit protein uS13c of Phaeodactylum tricornutum (strain CCAP 1055/1).